We begin with the raw amino-acid sequence, 251 residues long: Ubiquinone/menaquinone biosynthesis C-methyltransferase UbiE (251 aa).

Residues Thr-74, Asp-95, and 123-124 (NA) each bind S-adenosyl-L-methionine.

Belongs to the class I-like SAM-binding methyltransferase superfamily. MenG/UbiE family.

The catalysed reaction is a 2-demethylmenaquinol + S-adenosyl-L-methionine = a menaquinol + S-adenosyl-L-homocysteine + H(+). It carries out the reaction a 2-methoxy-6-(all-trans-polyprenyl)benzene-1,4-diol + S-adenosyl-L-methionine = a 5-methoxy-2-methyl-3-(all-trans-polyprenyl)benzene-1,4-diol + S-adenosyl-L-homocysteine + H(+). It participates in quinol/quinone metabolism; menaquinone biosynthesis; menaquinol from 1,4-dihydroxy-2-naphthoate: step 2/2. It functions in the pathway cofactor biosynthesis; ubiquinone biosynthesis. Its function is as follows. Methyltransferase required for the conversion of demethylmenaquinol (DMKH2) to menaquinol (MKH2) and the conversion of 2-polyprenyl-6-methoxy-1,4-benzoquinol (DDMQH2) to 2-polyprenyl-3-methyl-6-methoxy-1,4-benzoquinol (DMQH2). In Psychromonas ingrahamii (strain DSM 17664 / CCUG 51855 / 37), this protein is Ubiquinone/menaquinone biosynthesis C-methyltransferase UbiE.